The sequence spans 381 residues: Creatine kinase M-type (381 aa).

The region spanning 11 to 98 is the Phosphagen kinase N-terminal domain; that stretch reads KLNYKPQEEY…FDPIIQDRHG (88 aa). A Phosphagen kinase C-terminal domain is found at 125 to 367; that stretch reads YVLSSRVRTG…KLMVEMEKKL (243 aa). Position 128 to 132 (128 to 132) interacts with ATP; that stretch reads SSRVR. A Phosphoserine modification is found at serine 164. Threonine 166 bears the Phosphothreonine mark. The residue at position 178 (serine 178) is a Phosphoserine. Residue threonine 180 is modified to Phosphothreonine. Histidine 191 is an ATP binding site. Residue serine 199 is modified to Phosphoserine. Positions 236 and 292 each coordinate ATP. Phosphothreonine occurs at positions 313 and 322. ATP contacts are provided by residues 320-325 and aspartate 335; that span reads RGTGGV. Serine 372 bears the Phosphoserine mark.

Belongs to the ATP:guanido phosphotransferase family. In terms of assembly, dimer of identical or non-identical chains, which can be either B (brain type) or M (muscle type). With MM being the major form in skeletal muscle and myocardium, MB existing in myocardium, and BB existing in many tissues, especially brain.

It is found in the cytoplasm. The enzyme catalyses creatine + ATP = N-phosphocreatine + ADP + H(+). Reversibly catalyzes the transfer of phosphate between ATP and various phosphogens (e.g. creatine phosphate). Creatine kinase isoenzymes play a central role in energy transduction in tissues with large, fluctuating energy demands, such as skeletal muscle, heart, brain and spermatozoa. The protein is Creatine kinase M-type (Ckm) of Mus musculus (Mouse).